The primary structure comprises 73 residues: Small, acid-soluble spore protein C2 (73 aa).

Belongs to the alpha/beta-type SASP family.

Functionally, SASP are bound to spore DNA. They are double-stranded DNA-binding proteins that cause DNA to change to an a-like conformation. They protect the DNA backbone from chemical and enzymatic cleavage and are thus involved in dormant spore's high resistance to UV light. This is Small, acid-soluble spore protein C2 (SASP-C2) from Priestia megaterium (Bacillus megaterium).